The chain runs to 596 residues: Elongation factor 4 (596 aa).

The tr-type G domain occupies 2–184 (KHIRNFSIIA…VIVEQIPPPE (183 aa)). Residues 14 to 19 (DHGKST) and 131 to 134 (NKID) each bind GTP.

It belongs to the TRAFAC class translation factor GTPase superfamily. Classic translation factor GTPase family. LepA subfamily.

It localises to the cell inner membrane. It catalyses the reaction GTP + H2O = GDP + phosphate + H(+). In terms of biological role, required for accurate and efficient protein synthesis under certain stress conditions. May act as a fidelity factor of the translation reaction, by catalyzing a one-codon backward translocation of tRNAs on improperly translocated ribosomes. Back-translocation proceeds from a post-translocation (POST) complex to a pre-translocation (PRE) complex, thus giving elongation factor G a second chance to translocate the tRNAs correctly. Binds to ribosomes in a GTP-dependent manner. The sequence is that of Elongation factor 4 from Shewanella sp. (strain MR-7).